The following is a 219-amino-acid chain: Transmembrane emp24 domain-containing protein 10 (219 aa).

Residues 1 to 31 form the signal peptide; it reads MSGSSGPLSWPGPRPCALLFLLLLGPSSVLA. The interval 1-142 is required for interaction with STX17; sequence MSGSSGPLSW…KNYEEIAKVE (142 aa). At 32–185 the chain is on the lumenal side; the sequence is ISFHLPVNSR…RDTNESTNTR (154 aa). The 153-residue stretch at 41-193 folds into the GOLD domain; the sequence is RKCLREEIHK…TRVLYFSIFS (153 aa). Residues 147-178 form a required for TMED10 and TMED2 cis-Golgi network localization region; that stretch reads LEVELRRLEDLSESIVNDFAYMKKREEEMRDT. Dimethylated arginine is present on residues R171 and R176. An N-linked (GlcNAc...) asparagine glycan is attached at N179. A helical membrane pass occupies residues 186-206; the sequence is VLYFSIFSMLCLIGLATWQVF. The interval 204-219 is interaction with COPG1; it reads QVFYLRRFFKAKKLIE. Over 207–219 the chain is Cytoplasmic; it reads YLRRFFKAKKLIE. Positions 207-219 are interaction with ARF1 and IL1B; that stretch reads YLRRFFKAKKLIE. The COPII vesicle coat-binding signature appears at 211 to 212; sequence FF. The COPI vesicle coat-binding motif lies at 211–219; it reads FFKAKKLIE.

This sequence belongs to the EMP24/GP25L family. Predominantly dimeric and to a lesser extent monomeric in the ER. Monomer and dimer in ERGIC and cis-Golgi network. Forms homooligomer (via GOLD domain); the assembly is promoted by direct binding with leaderless cargos and may form a protein channel that facilitates cargo entry into the ERGIC. Forms heterooligomeric complexes with other members of the p24 family such as TMED2, TMED7 and TMED9. Interacts (via GOLD domain) with TMED2 (via GOLD domain); the complex is required for export of TMED10 from the ER to the cis-Golgi network; the complex is proposed to be involved in cis-Golgi network dynamics and / or biogenesis. Associates with the COPI vesicle coat subunits (coatomer). Tetramerization of the cytoplasmic domain at the Golgi membrane in vitro; the complex is proposed to interact with COPI coatomer and induce budding of the vesicles. Interacts with COPG1; the interaction involves TMED10 homodimer. Interacts with ARF1 (GDP-bound); the interaction probably involves a TMED10 oligomer. Interacts with SEC23A, SEC24B, SEC24C and SEC24D components of the coat protein complex II/COPII, indicative of an association of TMED10 with the COPII vesicle coat. Interacts with CD59. Interacts with MPPE1/PGAP5; the complex might recruit and sort GPI-anchored proteins to the ER-exit site, or the interaction might lead to recycling of PGAP5 between the ER and the Golgi. Interacts with F2LR1/PAR2. Interacts with KDELR2/ERD2; the interaction is disrupted by KDELR2 ligand. Found in a complex composed at least of SURF4, TMED2 and TMED10. Associates with the presenilin-dependent gamma-secretase complex. Interacts with STX17; the interaction is direct. Interacts with IL-1; the interaction is direct. Interacts with RAB21 (active GTP-bound form); the interaction is indirect and regulates TMED10 abundance and localization at the Golgi.

The protein resides in the endoplasmic reticulum membrane. It is found in the endoplasmic reticulum-Golgi intermediate compartment membrane. Its subcellular location is the golgi apparatus membrane. The protein localises to the golgi apparatus. It localises to the cis-Golgi network membrane. The protein resides in the trans-Golgi network membrane. It is found in the cytoplasmic vesicle. Its subcellular location is the secretory vesicle membrane. The protein localises to the cell membrane. It localises to the melanosome. In terms of biological role, cargo receptor involved in protein vesicular trafficking and quality control in the endoplasmic reticulum (ER) and Golgi. The p24 protein family is a group of transmembrane proteins that bind coat protein complex I/COPI and coat protein complex II/COPII involved in vesicular trafficking between the membranes. Acts at the lumenal side for incorporation of secretory cargo molecules into transport vesicles and involved in vesicle coat formation at the cytoplasmic side. Mainly functions in the early secretory pathway and cycles between the ER, ER-Golgi intermediate compartment (ERGIC) and Golgi, mediating cargo transport through COPI and COPII-coated vesicles. In COPII vesicle-mediated anterograde transport, involved in the transport of GPI-anchored proteins by acting together with TMED2 as their cargo receptor; the function specifically implies SEC24C and SEC24D of the COPII vesicle coat and lipid raft-like microdomains of the ER. Recognizes GPI anchors structural remodeled in the ER by the GPI inositol-deacylase/PGAP1 and the metallophosphoesterase MPPE1/PGAP5. In COPI vesicle-mediated retrograde transport, involved in the biogenesis of COPI vesicles and vesicle coat recruitment. Involved in trafficking of amyloid beta A4 protein and soluble APP-beta release (independent from the modulation of gamma-secretase activity). Involved in the KDELR2-mediated retrograde transport of the toxin A subunit (CTX-A-K63)together with COPI and the COOH terminus of KDELR2. On Golgi membranes, acts as a primary receptor for ARF1-GDP, a GTP-binding protein involved in COPI-vesicle formation. Increases coatomer-dependent GTPase-activating activity of ARFGAP2 which mediates the hydrolysis of ARF1-bound GTP and therefore modulates protein trafficking from the Golgi apparatus. Involved in the exocytic trafficking of G protein-coupled receptors F2LR1/PAR2 (trypsin and tryspin-like enzyme receptor), OPRM1 (opioid receptor) and P2RY4 (UTD and UDP receptor) from the Golgi to the plasma membrane, thus contributing to receptor resensitization. In addition to its cargo receptor activity, may also act as a protein channel after oligomerization, facilitating the post-translational entry of leaderless cytoplasmic cargo into the ERGIC. Involved in the translocation into ERGIC, the vesicle entry and the secretion of leaderless cargos (lacking the secretion signal sequence), including the mature form of interleukin 1/IL-1 family members, the alpha-crystallin B chain HSPB5, the carbohydrate-binding proteins galectin-1/LGALS1 and galectin-3/LGALS3, the microtubule-associated protein Tau/MAPT, and the annexin A1/ANXA1; the translocation process is dependent on cargo protein unfolding and enhanced by chaperones HSP90AB1 and HSP90B1/GRP9. Could also associates with the presenilin-dependent gamma-secretase complex in order to regulate gamma-cleavages of the amyloid beta A4 protein to yield amyloid-beta 40/Abeta40. The chain is Transmembrane emp24 domain-containing protein 10 (TMED10) from Mesocricetus auratus (Golden hamster).